The chain runs to 465 residues: Adenosylhomocysteinase (465 aa).

Thr-56, Asp-131, and Glu-191 together coordinate substrate. 192-194 (TTT) lines the NAD(+) pocket. Residues Lys-221 and Asp-225 each contribute to the substrate site. Residues Asn-226, 255-260 (GYGDVG), Glu-278, Asn-313, 334-336 (IGH), and Asn-379 each bind NAD(+).

It belongs to the adenosylhomocysteinase family. The cofactor is NAD(+).

It is found in the cytoplasm. The enzyme catalyses S-adenosyl-L-homocysteine + H2O = L-homocysteine + adenosine. It functions in the pathway amino-acid biosynthesis; L-homocysteine biosynthesis; L-homocysteine from S-adenosyl-L-homocysteine: step 1/1. Functionally, may play a key role in the regulation of the intracellular concentration of adenosylhomocysteine. The protein is Adenosylhomocysteinase of Bartonella henselae (strain ATCC 49882 / DSM 28221 / CCUG 30454 / Houston 1) (Rochalimaea henselae).